The sequence spans 105 residues: ATP synthase subunit c (105 aa).

A run of 3 helical transmembrane segments spans residues Phe3–Asp23, Ser32–Gly52, and Val78–Ile98.

The protein belongs to the ATPase C chain family. F-type ATPases have 2 components, F(1) - the catalytic core - and F(0) - the membrane proton channel. F(1) has five subunits: alpha(3), beta(3), gamma(1), delta(1), epsilon(1). F(0) has three main subunits: a(1), b(2) and c(10-14). The alpha and beta chains form an alternating ring which encloses part of the gamma chain. F(1) is attached to F(0) by a central stalk formed by the gamma and epsilon chains, while a peripheral stalk is formed by the delta and b chains.

The protein localises to the cell inner membrane. Functionally, f(1)F(0) ATP synthase produces ATP from ADP in the presence of a proton or sodium gradient. F-type ATPases consist of two structural domains, F(1) containing the extramembraneous catalytic core and F(0) containing the membrane proton channel, linked together by a central stalk and a peripheral stalk. During catalysis, ATP synthesis in the catalytic domain of F(1) is coupled via a rotary mechanism of the central stalk subunits to proton translocation. Its function is as follows. Key component of the F(0) channel; it plays a direct role in translocation across the membrane. A homomeric c-ring of between 10-14 subunits forms the central stalk rotor element with the F(1) delta and epsilon subunits. The sequence is that of ATP synthase subunit c from Helicobacter acinonychis (strain Sheeba).